Here is a 156-residue protein sequence, read N- to C-terminus: Ribonuclease H (156 aa).

Residues 2–144 enclose the RNase H type-1 domain; sequence TMKNVQAFTD…CDVLARTQAS (143 aa). 4 residues coordinate Mg(2+): Asp-11, Glu-49, Asp-71, and Asp-136.

The protein belongs to the RNase H family. In terms of assembly, monomer. Requires Mg(2+) as cofactor.

The protein localises to the cytoplasm. It carries out the reaction Endonucleolytic cleavage to 5'-phosphomonoester.. Endonuclease that specifically degrades the RNA of RNA-DNA hybrids. In Nitratidesulfovibrio vulgaris (strain DSM 19637 / Miyazaki F) (Desulfovibrio vulgaris), this protein is Ribonuclease H.